An 867-amino-acid chain; its full sequence is Nuclear cap-binding protein subunit 1 (867 aa).

The MIF4G domain occupies 9–228 (LLRIGDRCPE…DLWERIQVLS (220 aa)). The tract at residues 752–797 (SADGDVPNLRAGDPNVNSSARDPEATTMEIDNENGGDNDSQLNGQN) is disordered. Residues 788–797 (DNDSQLNGQN) are compositionally biased toward polar residues.

It belongs to the NCBP1 family. As to quaternary structure, component of the nuclear cap-binding complex (CBC), a heterodimer composed of ABH1/CBP80 and CBP20 that interacts with m7GpppG-capped RNA.

The protein localises to the nucleus. Its subcellular location is the cytoplasm. Its function is as follows. Component of the cap-binding complex (CBC), which binds cotranscriptionally to the 5'-cap of pre-mRNAs and is involved in various processes such as pre-mRNA splicing and RNA-mediated gene silencing (RNAi) by microRNAs (miRNAs). The CBC complex is involved in miRNA-mediated RNA interference and is required for primary miRNA processing. In the CBC complex, ABH1/CBP80 does not bind directly capped RNAs (m7GpppG-capped RNA) but is required to stabilize the movement of the N-terminal loop of CBP20 and lock the CBC into a high affinity cap-binding state with the cap structure. The sequence is that of Nuclear cap-binding protein subunit 1 (ABH1) from Oryza sativa subsp. japonica (Rice).